We begin with the raw amino-acid sequence, 115 residues long: NADH-ubiquinone oxidoreductase chain 3 (115 aa).

Helical transmembrane passes span 4–24 (IVIL…AFWL), 55–75 (FFLI…LLPL), and 84–104 (TYFT…GLMY).

It belongs to the complex I subunit 3 family. As to quaternary structure, core subunit of respiratory chain NADH dehydrogenase (Complex I) which is composed of 45 different subunits. Interacts with TMEM186. Interacts with TMEM242.

It localises to the mitochondrion inner membrane. It catalyses the reaction a ubiquinone + NADH + 5 H(+)(in) = a ubiquinol + NAD(+) + 4 H(+)(out). In terms of biological role, core subunit of the mitochondrial membrane respiratory chain NADH dehydrogenase (Complex I) which catalyzes electron transfer from NADH through the respiratory chain, using ubiquinone as an electron acceptor. Essential for the catalytic activity of complex I. The sequence is that of NADH-ubiquinone oxidoreductase chain 3 from Eligmodontia typus (Highland gerbil mouse).